Reading from the N-terminus, the 302-residue chain is Quinolinate synthase (302 aa).

H24 and S41 together coordinate iminosuccinate. C86 contacts [4Fe-4S] cluster. Iminosuccinate is bound by residues 112-114 (YVN) and S129. C173 is a [4Fe-4S] cluster binding site. Residues 199–201 (HPE) and T216 each bind iminosuccinate. C259 lines the [4Fe-4S] cluster pocket.

It belongs to the quinolinate synthase family. Type 2 subfamily. [4Fe-4S] cluster is required as a cofactor.

It localises to the cytoplasm. The enzyme catalyses iminosuccinate + dihydroxyacetone phosphate = quinolinate + phosphate + 2 H2O + H(+). The protein operates within cofactor biosynthesis; NAD(+) biosynthesis; quinolinate from iminoaspartate: step 1/1. Functionally, catalyzes the condensation of iminoaspartate with dihydroxyacetone phosphate to form quinolinate. The protein is Quinolinate synthase of Thermococcus onnurineus (strain NA1).